The chain runs to 28 residues: Phospholipase A2 3 (28 aa).

Belongs to the phospholipase A2 family. Group I subfamily. Ca(2+) serves as cofactor. Expressed by the venom gland.

The protein resides in the secreted. It catalyses the reaction a 1,2-diacyl-sn-glycero-3-phosphocholine + H2O = a 1-acyl-sn-glycero-3-phosphocholine + a fatty acid + H(+). In terms of biological role, snake venom phospholipase A2 (PLA2) that inhibits neuromuscular transmission by blocking acetylcholine release from the nerve termini. PLA2 catalyzes the calcium-dependent hydrolysis of the 2-acyl groups in 3-sn-phosphoglycerides. This is Phospholipase A2 3 from Micrurus nigrocinctus (Central American coral snake).